Here is a 605-residue protein sequence, read N- to C-terminus: Aspartate--tRNA(Asp/Asn) ligase (605 aa).

Residue E183 participates in L-aspartate binding. The aspartate stretch occupies residues 207–210 (QLFK). R229 serves as a coordination point for L-aspartate. ATP contacts are provided by residues 229 to 231 (RDE) and Q238. H457 is a binding site for L-aspartate. E497 provides a ligand contact to ATP. R504 contributes to the L-aspartate binding site. Residue 549 to 552 (GLDR) participates in ATP binding.

The protein belongs to the class-II aminoacyl-tRNA synthetase family. Type 1 subfamily. Homodimer.

It localises to the cytoplasm. The enzyme catalyses tRNA(Asx) + L-aspartate + ATP = L-aspartyl-tRNA(Asx) + AMP + diphosphate. In terms of biological role, aspartyl-tRNA synthetase with relaxed tRNA specificity since it is able to aspartylate not only its cognate tRNA(Asp) but also tRNA(Asn). Reaction proceeds in two steps: L-aspartate is first activated by ATP to form Asp-AMP and then transferred to the acceptor end of tRNA(Asp/Asn). The protein is Aspartate--tRNA(Asp/Asn) ligase of Persephonella marina (strain DSM 14350 / EX-H1).